A 162-amino-acid chain; its full sequence is Peptidyl-prolyl cis-trans isomerase (162 aa).

The 157-residue stretch at 5–161 (FFDVIANGQP…ARIVIDKCGT (157 aa)) folds into the PPIase cyclophilin-type domain.

The protein belongs to the cyclophilin-type PPIase family. PPIase A subfamily.

It localises to the cytoplasm. The enzyme catalyses [protein]-peptidylproline (omega=180) = [protein]-peptidylproline (omega=0). With respect to regulation, binds cyclosporin A (CsA). CsA mediates some of its effects via an inhibitory action on PPIase. PPIases accelerate the folding of proteins. It catalyzes the cis-trans isomerization of proline imidic peptide bonds in oligopeptides. This chain is Peptidyl-prolyl cis-trans isomerase (ppi1), found in Schizosaccharomyces pombe (strain 972 / ATCC 24843) (Fission yeast).